The sequence spans 372 residues: Queuine tRNA-ribosyltransferase (372 aa).

Aspartate 93 serves as the catalytic Proton acceptor. Substrate-binding positions include aspartate 93 to phenylalanine 97, aspartate 147, glutamine 190, and glycine 217. The interval glycine 248–cysteine 254 is RNA binding. Catalysis depends on aspartate 267, which acts as the Nucleophile. Positions threonine 272–arginine 276 are RNA binding; important for wobble base 34 recognition. 4 residues coordinate Zn(2+): cysteine 305, cysteine 307, cysteine 310, and histidine 336.

Belongs to the queuine tRNA-ribosyltransferase family. In terms of assembly, homodimer. Within each dimer, one monomer is responsible for RNA recognition and catalysis, while the other monomer binds to the replacement base PreQ1. Zn(2+) serves as cofactor.

It carries out the reaction 7-aminomethyl-7-carbaguanine + guanosine(34) in tRNA = 7-aminomethyl-7-carbaguanosine(34) in tRNA + guanine. Its pathway is tRNA modification; tRNA-queuosine biosynthesis. In terms of biological role, catalyzes the base-exchange of a guanine (G) residue with the queuine precursor 7-aminomethyl-7-deazaguanine (PreQ1) at position 34 (anticodon wobble position) in tRNAs with GU(N) anticodons (tRNA-Asp, -Asn, -His and -Tyr). Catalysis occurs through a double-displacement mechanism. The nucleophile active site attacks the C1' of nucleotide 34 to detach the guanine base from the RNA, forming a covalent enzyme-RNA intermediate. The proton acceptor active site deprotonates the incoming PreQ1, allowing a nucleophilic attack on the C1' of the ribose to form the product. After dissociation, two additional enzymatic reactions on the tRNA convert PreQ1 to queuine (Q), resulting in the hypermodified nucleoside queuosine (7-(((4,5-cis-dihydroxy-2-cyclopenten-1-yl)amino)methyl)-7-deazaguanosine). The chain is Queuine tRNA-ribosyltransferase from Desulforudis audaxviator (strain MP104C).